We begin with the raw amino-acid sequence, 212 residues long: Ribonuclease HII (212 aa).

Residues 28–212 (SIIAGVDEVG…KSFAPIRQVV (185 aa)) form the RNase H type-2 domain. 3 residues coordinate a divalent metal cation: D34, E35, and D127.

It belongs to the RNase HII family. It depends on Mn(2+) as a cofactor. Mg(2+) is required as a cofactor.

It localises to the cytoplasm. The enzyme catalyses Endonucleolytic cleavage to 5'-phosphomonoester.. Endonuclease that specifically degrades the RNA of RNA-DNA hybrids. This is Ribonuclease HII from Chlamydia caviae (strain ATCC VR-813 / DSM 19441 / 03DC25 / GPIC) (Chlamydophila caviae).